The chain runs to 27 residues: Caerulein precursor fragment R7 (27 aa).

Expressed by the skin glands.

It is found in the secreted. Functionally, antimicrobial peptide. This Xenopus ruwenzoriensis (Uganda clawed frog) protein is Caerulein precursor fragment R7.